The primary structure comprises 58 residues: Large ribosomal subunit protein bL32 (58 aa).

It belongs to the bacterial ribosomal protein bL32 family.

The sequence is that of Large ribosomal subunit protein bL32 from Ligilactobacillus salivarius (strain UCC118) (Lactobacillus salivarius).